A 333-amino-acid polypeptide reads, in one-letter code: CMP-N-acetylneuraminate-beta-galactosamide-alpha-2,3-sialyltransferase 4 (333 aa).

Topologically, residues 1–8 (MTSKSHWK) are cytoplasmic. A helical; Signal-anchor for type II membrane protein membrane pass occupies residues 9 to 26 (LLALALVLVVVMVWYSIS). Residues 27–333 (REDRYIEFFY…MGAVKNLTYF (307 aa)) lie on the Lumenal side of the membrane. Residues asparagine 61, asparagine 131, asparagine 310, and asparagine 329 are each glycosylated (N-linked (GlcNAc...) asparagine). Cysteine 120 and cysteine 273 form a disulfide bridge.

It belongs to the glycosyltransferase 29 family.

It localises to the golgi apparatus. It is found in the golgi stack membrane. The catalysed reaction is a beta-D-galactosyl-(1-&gt;3)-N-acetyl-beta-D-galactosaminyl derivative + CMP-N-acetyl-beta-neuraminate = an N-acetyl-alpha-neuraminyl-(2-&gt;3)-beta-D-galactosyl-(1-&gt;3)-N-acetyl-beta-D-galactosaminyl derivative + CMP + H(+). It catalyses the reaction a beta-D-galactosyl-(1-&gt;3)-N-acetyl-alpha-D-galactosaminyl derivative + CMP-N-acetyl-beta-neuraminate = an N-acetyl-alpha-neuraminyl-(2-&gt;3)-beta-D-galactosyl-(1-&gt;3)-N-acetyl-alpha-D-galactosaminyl derivative + CMP + H(+). It carries out the reaction a beta-D-galactosyl-(1-&gt;4)-N-acetyl-beta-D-glucosaminyl derivative + CMP-N-acetyl-beta-neuraminate = an N-acetyl-alpha-neuraminyl-(2-&gt;3)-beta-D-galactosyl-(1-&gt;4)-N-acetyl-beta-D-glucosaminyl derivative + CMP + H(+). The enzyme catalyses a ganglioside GM1 (d18:1(4E)) + CMP-N-acetyl-beta-neuraminate = a ganglioside GD1a (d18:1(4E)) + CMP + H(+). The catalysed reaction is a ganglioside GA1 (d18:1(4E)) + CMP-N-acetyl-beta-neuraminate = a ganglioside GM1b (d18:1(4E)) + CMP + H(+). It catalyses the reaction a ganglioside GT1c (d18:1(4E)) + CMP-N-acetyl-beta-neuraminate = a ganglioside GQ1c (d18:1(4E)) + CMP + H(+). It carries out the reaction a neolactoside nLc4Cer + CMP-N-acetyl-beta-neuraminate = a neolactoside IV(3)-alpha-NeuAc-nLc4Cer + CMP + H(+). The enzyme catalyses a neolactoside nLc4Cer(d18:1(4E)) + CMP-N-acetyl-beta-neuraminate = a neolactoside IV(3)-alpha-NeuAc-nLc4Cer(d18:1(4E)) + CMP + H(+). Its pathway is protein modification; protein glycosylation. The protein operates within glycolipid biosynthesis. A beta-galactoside alpha2-3 sialyltransferase involved in terminal sialylation of glycoproteins and glycolipids. Catalyzes the transfer of sialic acid (N-acetyl-neuraminic acid; Neu5Ac) from the nucleotide sugar donor CMP-Neu5Ac onto acceptor Galbeta-(1-&gt;3)-GalNAc- and Galbeta-(1-&gt;4)-GlcNAc-terminated glycoconjugates through an alpha2-3 linkage. Plays a major role in hemostasis. Responsible for sialylation of plasma VWF/von Willebrand factor, preventing its recognition by asialoglycoprotein receptors (ASGPR) and subsequent clearance. Regulates ASGPR-mediated clearance of platelets. Participates in the biosynthesis of the sialyl Lewis X epitopes, both on O- and N-glycans, which are recognized by SELE/E-selectin, SELP/P-selectin and SELL/L-selectin. Essential for selectin-mediated rolling and adhesion of leukocytes during extravasation. Contributes to adhesion and transendothelial migration of neutrophils likely through terminal sialylation of CXCR2. In glycosphingolipid biosynthesis, sialylates GM1 and GA1 gangliosides to form GD1a and GM1b, respectively. Metabolizes brain c-series ganglioside GT1c forming GQ1c. Synthesizes ganglioside LM1 (IV3Neu5Ac-nLc4Cer), a major structural component of peripheral nerve myelin. The polypeptide is CMP-N-acetylneuraminate-beta-galactosamide-alpha-2,3-sialyltransferase 4 (St3gal4) (Rattus norvegicus (Rat)).